A 689-amino-acid polypeptide reads, in one-letter code: Glycine--tRNA ligase beta subunit (689 aa).

Belongs to the class-II aminoacyl-tRNA synthetase family. Tetramer of two alpha and two beta subunits.

It is found in the cytoplasm. It catalyses the reaction tRNA(Gly) + glycine + ATP = glycyl-tRNA(Gly) + AMP + diphosphate. The chain is Glycine--tRNA ligase beta subunit from Escherichia coli O139:H28 (strain E24377A / ETEC).